Reading from the N-terminus, the 155-residue chain is Small ribosomal subunit protein uS7c (155 aa).

This sequence belongs to the universal ribosomal protein uS7 family. As to quaternary structure, part of the 30S ribosomal subunit.

The protein resides in the plastid. Its subcellular location is the chloroplast. In terms of biological role, one of the primary rRNA binding proteins, it binds directly to 16S rRNA where it nucleates assembly of the head domain of the 30S subunit. The protein is Small ribosomal subunit protein uS7c (rps7) of Cedrus deodara (Deodar cedar).